Reading from the N-terminus, the 165-residue chain is HTH-type transcriptional regulator IscR (165 aa).

The 130-residue stretch at Arg2–Ser131 folds into the HTH rrf2-type domain. A DNA-binding region (H-T-H motif) is located at residues Leu28 to Lys51. [2Fe-2S] cluster contacts are provided by Cys92, Cys98, and Cys104. The disordered stretch occupies residues Asn144 to Ala165. The span at Gly153–Ala165 shows a compositional bias: polar residues.

The cofactor is [2Fe-2S] cluster.

In terms of biological role, regulates the transcription of several operons and genes involved in the biogenesis of Fe-S clusters and Fe-S-containing proteins. The sequence is that of HTH-type transcriptional regulator IscR from Sodalis glossinidius (strain morsitans).